We begin with the raw amino-acid sequence, 119 residues long: Phosphoribosyl-AMP cyclohydrolase (119 aa).

Position 78 (Asp78) interacts with Mg(2+). Cys79 is a binding site for Zn(2+). 2 residues coordinate Mg(2+): Asp80 and Asp82. Residues Cys95 and Cys102 each contribute to the Zn(2+) site.

The protein belongs to the PRA-CH family. As to quaternary structure, homodimer. Mg(2+) is required as a cofactor. The cofactor is Zn(2+).

It localises to the cytoplasm. It carries out the reaction 1-(5-phospho-beta-D-ribosyl)-5'-AMP + H2O = 1-(5-phospho-beta-D-ribosyl)-5-[(5-phospho-beta-D-ribosylamino)methylideneamino]imidazole-4-carboxamide. Its pathway is amino-acid biosynthesis; L-histidine biosynthesis; L-histidine from 5-phospho-alpha-D-ribose 1-diphosphate: step 3/9. In terms of biological role, catalyzes the hydrolysis of the adenine ring of phosphoribosyl-AMP. The polypeptide is Phosphoribosyl-AMP cyclohydrolase (Jannaschia sp. (strain CCS1)).